The primary structure comprises 577 residues: Scoloptoxin SSD14 (577 aa).

Residues 1 to 25 form the signal peptide; that stretch reads MGTSYRKLGYVLFLMLGMIVEEGIA.

In terms of assembly, heterodimer composed of subunits alpha and beta; probably disulfide-linked. Expressed by the venom gland.

The protein resides in the secreted. Dose-dependently induces human platelet aggregation on both plasma rich platelet and washed platelet (max. response at 3.2 ug/mL) and causes hemolysis against mouse and rabbit erythrocytes (35 and 65% respectively at 5 ug/mL). Does not show hemolytic activity against human erythrocytes (even at 100 ug/mL). The chain is Scoloptoxin SSD14 from Scolopendra dehaani (Thai centipede).